Consider the following 479-residue polypeptide: PTS system glucose-specific EIICB component (479 aa).

Positions 1-388 (MFKNAFSNLQ…FNLKTPGREK (388 aa)) constitute a PTS EIIC type-1 domain. 9 consecutive transmembrane segments (helical) span residues 15–35 (SLMLPVSVLPIAGILLGIGSA), 51–71 (AGSSVFSNMPLIFAIGIALGF), 80–100 (LAAVVSYGIMTKTLSITIPIF), 112–132 (YLLDTGILGGIIAGSISAYIF), 152–172 (FVPIASGLISIIFGCILSIIW), 252–272 (GGFIFKMYGLPFAALAMWHCA), 280–300 (IGGIMMSGALTAILTGITEPI), 305–325 (ILVAPILYVIHAILAGLAFPI), and 356–376 (LFPIVGLFYGILYYGIFYFMI). The 81-residue stretch at 399 to 479 (KETALLVISI…IDNYMSNTNQ (81 aa)) folds into the PTS EIIB type-1 domain. Catalysis depends on C421, which acts as the Phosphocysteine intermediate; for EIIB activity. Residue C421 is modified to Phosphocysteine.

The protein localises to the cell inner membrane. The catalysed reaction is N(pros)-phospho-L-histidyl-[protein] + D-glucose(out) = D-glucose 6-phosphate(in) + L-histidyl-[protein]. In terms of biological role, the phosphoenolpyruvate-dependent sugar phosphotransferase system (sugar PTS), a major carbohydrate active transport system, catalyzes the phosphorylation of incoming sugar substrates concomitantly with their translocation across the cell membrane. The enzyme II complex composed of PtsG and Crr is involved in glucose transport. In Buchnera aphidicola subsp. Baizongia pistaciae (strain Bp), this protein is PTS system glucose-specific EIICB component (ptsG).